Consider the following 222-residue polypeptide: uncharacterized protein (222 aa).

The next 4 helical transmembrane spans lie at 25-45 (LLWL…PATA), 80-100 (LLGA…ALIY), 111-131 (FAIM…FPLL), and 160-180 (LALT…VPFF).

It is found in the cell membrane. This is an uncharacterized protein from Bacillus subtilis (strain 168).